We begin with the raw amino-acid sequence, 309 residues long: 4-hydroxy-3-methylbut-2-enyl diphosphate reductase (309 aa).

Cys12 serves as a coordination point for [4Fe-4S] cluster. His41 and His74 together coordinate (2E)-4-hydroxy-3-methylbut-2-enyl diphosphate. 2 residues coordinate dimethylallyl diphosphate: His41 and His74. Residues His41 and His74 each coordinate isopentenyl diphosphate. [4Fe-4S] cluster is bound at residue Cys96. His124 provides a ligand contact to (2E)-4-hydroxy-3-methylbut-2-enyl diphosphate. Residue His124 coordinates dimethylallyl diphosphate. Position 124 (His124) interacts with isopentenyl diphosphate. The active-site Proton donor is the Glu126. Thr167 is a (2E)-4-hydroxy-3-methylbut-2-enyl diphosphate binding site. Cys197 contributes to the [4Fe-4S] cluster binding site. Positions 225, 226, 227, and 269 each coordinate (2E)-4-hydroxy-3-methylbut-2-enyl diphosphate. 4 residues coordinate dimethylallyl diphosphate: Ser225, Ser226, Asn227, and Ser269. Ser225, Ser226, Asn227, and Ser269 together coordinate isopentenyl diphosphate.

It belongs to the IspH family. It depends on [4Fe-4S] cluster as a cofactor.

It carries out the reaction isopentenyl diphosphate + 2 oxidized [2Fe-2S]-[ferredoxin] + H2O = (2E)-4-hydroxy-3-methylbut-2-enyl diphosphate + 2 reduced [2Fe-2S]-[ferredoxin] + 2 H(+). The enzyme catalyses dimethylallyl diphosphate + 2 oxidized [2Fe-2S]-[ferredoxin] + H2O = (2E)-4-hydroxy-3-methylbut-2-enyl diphosphate + 2 reduced [2Fe-2S]-[ferredoxin] + 2 H(+). It participates in isoprenoid biosynthesis; dimethylallyl diphosphate biosynthesis; dimethylallyl diphosphate from (2E)-4-hydroxy-3-methylbutenyl diphosphate: step 1/1. Its pathway is isoprenoid biosynthesis; isopentenyl diphosphate biosynthesis via DXP pathway; isopentenyl diphosphate from 1-deoxy-D-xylulose 5-phosphate: step 6/6. Catalyzes the conversion of 1-hydroxy-2-methyl-2-(E)-butenyl 4-diphosphate (HMBPP) into a mixture of isopentenyl diphosphate (IPP) and dimethylallyl diphosphate (DMAPP). Acts in the terminal step of the DOXP/MEP pathway for isoprenoid precursor biosynthesis. In Colwellia psychrerythraea (strain 34H / ATCC BAA-681) (Vibrio psychroerythus), this protein is 4-hydroxy-3-methylbut-2-enyl diphosphate reductase.